The following is a 191-amino-acid chain: Large ribosomal subunit protein uL6 (191 aa).

This sequence belongs to the universal ribosomal protein uL6 family. As to quaternary structure, part of the 50S ribosomal subunit.

Functionally, this protein binds to the 23S rRNA, and is important in its secondary structure. It is located near the subunit interface in the base of the L7/L12 stalk, and near the tRNA binding site of the peptidyltransferase center. This Cyanothece sp. (strain PCC 7425 / ATCC 29141) protein is Large ribosomal subunit protein uL6.